Consider the following 294-residue polypeptide: Elongation factor Ts (294 aa).

The interval 82–85 is involved in Mg(2+) ion dislocation from EF-Tu; the sequence is TDFV.

This sequence belongs to the EF-Ts family.

Its subcellular location is the cytoplasm. Its function is as follows. Associates with the EF-Tu.GDP complex and induces the exchange of GDP to GTP. It remains bound to the aminoacyl-tRNA.EF-Tu.GTP complex up to the GTP hydrolysis stage on the ribosome. This chain is Elongation factor Ts, found in Psychrobacter arcticus (strain DSM 17307 / VKM B-2377 / 273-4).